Here is a 430-residue protein sequence, read N- to C-terminus: Bifunctional protein GlmU (430 aa).

Positions 1-223 (MSFSVVILAA…KNEFQGVNSK (223 aa)) are pyrophosphorylase. UDP-N-acetyl-alpha-D-glucosamine contacts are provided by residues 8-11 (LAAG), Lys22, and 81-82 (GT). Asp102 is a Mg(2+) binding site. The UDP-N-acetyl-alpha-D-glucosamine site is built by Gly135, Glu149, Asn164, and Asn221. Asn221 serves as a coordination point for Mg(2+). Residues 224 to 244 (YDLANAEIVMQDRIKRHWMQQ) form a linker region. Positions 245-430 (GVIMRLPQTI…DFYYKFFGKN (186 aa)) are N-acetyltransferase. Residues Arg308 and Lys325 each contribute to the UDP-N-acetyl-alpha-D-glucosamine site. His336 (proton acceptor) is an active-site residue. UDP-N-acetyl-alpha-D-glucosamine is bound by residues Tyr339 and Asn350. Acetyl-CoA is bound by residues Ala353, 359-360 (NY), Ser378, Ala396, and Arg413.

The protein in the N-terminal section; belongs to the N-acetylglucosamine-1-phosphate uridyltransferase family. In the C-terminal section; belongs to the transferase hexapeptide repeat family. As to quaternary structure, homotrimer. Mg(2+) is required as a cofactor.

The protein localises to the cytoplasm. The enzyme catalyses alpha-D-glucosamine 1-phosphate + acetyl-CoA = N-acetyl-alpha-D-glucosamine 1-phosphate + CoA + H(+). It carries out the reaction N-acetyl-alpha-D-glucosamine 1-phosphate + UTP + H(+) = UDP-N-acetyl-alpha-D-glucosamine + diphosphate. Its pathway is nucleotide-sugar biosynthesis; UDP-N-acetyl-alpha-D-glucosamine biosynthesis; N-acetyl-alpha-D-glucosamine 1-phosphate from alpha-D-glucosamine 6-phosphate (route II): step 2/2. It participates in nucleotide-sugar biosynthesis; UDP-N-acetyl-alpha-D-glucosamine biosynthesis; UDP-N-acetyl-alpha-D-glucosamine from N-acetyl-alpha-D-glucosamine 1-phosphate: step 1/1. The protein operates within bacterial outer membrane biogenesis; LPS lipid A biosynthesis. In terms of biological role, catalyzes the last two sequential reactions in the de novo biosynthetic pathway for UDP-N-acetylglucosamine (UDP-GlcNAc). The C-terminal domain catalyzes the transfer of acetyl group from acetyl coenzyme A to glucosamine-1-phosphate (GlcN-1-P) to produce N-acetylglucosamine-1-phosphate (GlcNAc-1-P), which is converted into UDP-GlcNAc by the transfer of uridine 5-monophosphate (from uridine 5-triphosphate), a reaction catalyzed by the N-terminal domain. The polypeptide is Bifunctional protein GlmU (Nitratiruptor sp. (strain SB155-2)).